Here is a 391-residue protein sequence, read N- to C-terminus: Imidazolonepropionase (391 aa).

Residues H72 and H74 each coordinate Fe(3+). Zn(2+) is bound by residues H72 and H74. R81, Y139, and H166 together coordinate 4-imidazolone-5-propanoate. Y139 lines the N-formimidoyl-L-glutamate pocket. H229 lines the Fe(3+) pocket. H229 serves as a coordination point for Zn(2+). 4-imidazolone-5-propanoate is bound at residue Q232. D303 contacts Fe(3+). Zn(2+) is bound at residue D303. 2 residues coordinate N-formimidoyl-L-glutamate: N305 and G307. Position 308 (S308) interacts with 4-imidazolone-5-propanoate.

This sequence belongs to the metallo-dependent hydrolases superfamily. HutI family. It depends on Zn(2+) as a cofactor. Requires Fe(3+) as cofactor.

The protein localises to the cytoplasm. It carries out the reaction 4-imidazolone-5-propanoate + H2O = N-formimidoyl-L-glutamate. Its pathway is amino-acid degradation; L-histidine degradation into L-glutamate; N-formimidoyl-L-glutamate from L-histidine: step 3/3. Catalyzes the hydrolytic cleavage of the carbon-nitrogen bond in imidazolone-5-propanoate to yield N-formimidoyl-L-glutamate. It is the third step in the universal histidine degradation pathway. The protein is Imidazolonepropionase of Streptomyces coelicolor (strain ATCC BAA-471 / A3(2) / M145).